Here is a 233-residue protein sequence, read N- to C-terminus: Large ribosomal subunit protein bL25 (233 aa).

The tract at residues 1–23 (MATVRELKATARPKSGKGAARAE) is disordered.

It belongs to the bacterial ribosomal protein bL25 family. CTC subfamily. Part of the 50S ribosomal subunit; part of the 5S rRNA/L5/L18/L25 subcomplex. Contacts the 5S rRNA. Binds to the 5S rRNA independently of L5 and L18.

Its function is as follows. This is one of the proteins that binds to the 5S RNA in the ribosome where it forms part of the central protuberance. The protein is Large ribosomal subunit protein bL25 of Nitrobacter hamburgensis (strain DSM 10229 / NCIMB 13809 / X14).